The sequence spans 262 residues: Hydroxyethylthiazole kinase (262 aa).

Met50 contacts substrate. The ATP site is built by Arg125 and Thr171. Residue Gly198 participates in substrate binding.

The protein belongs to the Thz kinase family. Mg(2+) serves as cofactor.

The catalysed reaction is 5-(2-hydroxyethyl)-4-methylthiazole + ATP = 4-methyl-5-(2-phosphooxyethyl)-thiazole + ADP + H(+). Its pathway is cofactor biosynthesis; thiamine diphosphate biosynthesis; 4-methyl-5-(2-phosphoethyl)-thiazole from 5-(2-hydroxyethyl)-4-methylthiazole: step 1/1. Its function is as follows. Catalyzes the phosphorylation of the hydroxyl group of 4-methyl-5-beta-hydroxyethylthiazole (THZ). The polypeptide is Hydroxyethylthiazole kinase (Escherichia coli O7:K1 (strain IAI39 / ExPEC)).